Reading from the N-terminus, the 233-residue chain is Large ribosomal subunit protein uL1 (233 aa).

This sequence belongs to the universal ribosomal protein uL1 family. Part of the 50S ribosomal subunit.

Its function is as follows. Binds directly to 23S rRNA. The L1 stalk is quite mobile in the ribosome, and is involved in E site tRNA release. In terms of biological role, protein L1 is also a translational repressor protein, it controls the translation of the L11 operon by binding to its mRNA. The polypeptide is Large ribosomal subunit protein uL1 (Proteus vulgaris).